We begin with the raw amino-acid sequence, 144 residues long: Large ribosomal subunit protein uL15 (144 aa).

The interval 1–55 (MQLNELKPVAGSRFKRLRKGRGLSSGHGFTSGRGTKGQKAHGKTRLGFEGGQMPL) is disordered. The span at 23-35 (LSSGHGFTSGRGT) shows a compositional bias: gly residues.

Belongs to the universal ribosomal protein uL15 family. Part of the 50S ribosomal subunit.

Its function is as follows. Binds to the 23S rRNA. The protein is Large ribosomal subunit protein uL15 of Limosilactobacillus fermentum (strain NBRC 3956 / LMG 18251) (Lactobacillus fermentum).